The chain runs to 277 residues: Transcription antiterminator LicT (277 aa).

2 PRD domains span residues aspartate 65 to proline 170 and asparagine 171 to alanine 277.

The protein belongs to the transcriptional antiterminator BglG family. In terms of processing, phosphorylated.

Functionally, mediates positive regulation of the glucanase operon (licST) by functioning as an antiterminator factor of transcription. Prevents termination at terminator lic-t. In Bacillus subtilis (strain 168), this protein is Transcription antiterminator LicT (licT).